Consider the following 646-residue polypeptide: Threonine--tRNA ligase (646 aa).

One can recognise a TGS domain in the interval 1-63 (MAQISLTFPD…EADAKIAIHT (63 aa)). The tract at residues 247-544 (DHRKLGKEME…LIENYAGKLP (298 aa)) is catalytic. Positions 344, 395, and 521 each coordinate Zn(2+).

Belongs to the class-II aminoacyl-tRNA synthetase family. In terms of assembly, homodimer. Zn(2+) serves as cofactor.

Its subcellular location is the cytoplasm. It carries out the reaction tRNA(Thr) + L-threonine + ATP = L-threonyl-tRNA(Thr) + AMP + diphosphate + H(+). Catalyzes the attachment of threonine to tRNA(Thr) in a two-step reaction: L-threonine is first activated by ATP to form Thr-AMP and then transferred to the acceptor end of tRNA(Thr). Also edits incorrectly charged L-seryl-tRNA(Thr). This Cereibacter sphaeroides (strain ATCC 17025 / ATH 2.4.3) (Rhodobacter sphaeroides) protein is Threonine--tRNA ligase.